The sequence spans 268 residues: Shikimate dehydrogenase (NADP(+)) (268 aa).

Shikimate contacts are provided by residues 14–16 (SKS) and Thr-61. Residue Lys-65 is the Proton acceptor of the active site. Positions 86 and 102 each coordinate shikimate. Residues 126-130 (GAGGA), 149-154 (NRTFLK), and Met-213 contribute to the NADP(+) site. Tyr-215 lines the shikimate pocket. Gly-238 serves as a coordination point for NADP(+).

The protein belongs to the shikimate dehydrogenase family. In terms of assembly, homodimer.

It carries out the reaction shikimate + NADP(+) = 3-dehydroshikimate + NADPH + H(+). It functions in the pathway metabolic intermediate biosynthesis; chorismate biosynthesis; chorismate from D-erythrose 4-phosphate and phosphoenolpyruvate: step 4/7. Involved in the biosynthesis of the chorismate, which leads to the biosynthesis of aromatic amino acids. Catalyzes the reversible NADPH linked reduction of 3-dehydroshikimate (DHSA) to yield shikimate (SA). This chain is Shikimate dehydrogenase (NADP(+)), found in Haemophilus influenzae (strain PittGG).